A 61-amino-acid polypeptide reads, in one-letter code: Metallothionein-1E (61 aa).

Met1 carries the N-acetylmethionine modification. A beta region spans residues 1 to 29 (MDPNCSCATGGSCTCAGSCKCKECKCTSC). A divalent metal cation contacts are provided by Cys5, Cys7, Cys13, Cys15, Cys19, Cys21, Cys24, Cys26, Cys29, Cys33, Cys34, Cys36, Cys37, Cys41, Cys44, Cys48, Cys50, Cys57, Cys59, and Cys60. The tract at residues 30-61 (KKSCCSCCPVGCAKCAQGCVCKGASEKCSCCA) is alpha.

Belongs to the metallothionein superfamily. Type 1 family. Monomer.

In terms of biological role, metallothioneins have a high content of cysteine residues that bind various heavy metals; these proteins are transcriptionally regulated by both heavy metals and glucocorticoids. The polypeptide is Metallothionein-1E (MT1E) (Homo sapiens (Human)).